The sequence spans 542 residues: E3 ubiquitin-protein ligase RNF217 (542 aa).

2 disordered regions span residues 1–140 (MGEE…TRVG) and 176–216 (APAS…TDSL). A compositionally biased stretch (low complexity) spans 37 to 50 (SARAPPLRAASAEP). Residues 122-132 (DEQQEAPPGEE) show a composition bias toward acidic residues. A compositionally biased stretch (pro residues) spans 185–196 (PASPPGAPPVLN). Positions 197-213 (PPSTRSSFPSPRLSLPT) are enriched in low complexity. The segment at 259–478 (MVLMCRVCLE…LSIFGCKYRY (220 aa)) is TRIAD supradomain. Positions 263, 266, 283, 286, 383, 386, 391, 396, 423, and 426 each coordinate Zn(2+). The segment at 263–309 (CRVCLEDKPIKPLPCCKKAVCEECLKVYLSAQVQLGQVEIKCPITEC) adopts an RING-type 1 zinc-finger fold. The segment at 328–396 (IKYKYFLELG…HSPWHEGVNC (69 aa)) adopts an IBR-type zinc-finger fold. The segment at 423–452 (CPKCKIHIQRTEGCDHMTCSQCNTNFCYRC) adopts an RING-type 2; atypical zinc-finger fold. Residue Cys436 is part of the active site. Zn(2+) is bound by residues Cys441, Cys444, Cys449, Cys452, His465, and Cys474. Residues 503–523 (LIMVLGLALGAIAVVIGLFVF) traverse the membrane as a helical segment.

The protein belongs to the RBR family. RNF217 subfamily. Interacts with HAX1. As to expression, mainly expressed in testis and skeletal muscle.

It is found in the membrane. Its subcellular location is the cytoplasm. It catalyses the reaction [E2 ubiquitin-conjugating enzyme]-S-ubiquitinyl-L-cysteine + [acceptor protein]-L-lysine = [E2 ubiquitin-conjugating enzyme]-L-cysteine + [acceptor protein]-N(6)-ubiquitinyl-L-lysine.. Its pathway is protein modification; protein ubiquitination. Functionally, E3 ubiquitin-protein ligase which accepts ubiquitin from E2 ubiquitin-conjugating enzymes in the form of a thioester and then directly transfers the ubiquitin to targeted substrates. Mediates the degradation of the iron exporter ferroportin/SLC40A1 and thus regulates iron homeostasis. This is E3 ubiquitin-protein ligase RNF217 (RNF217) from Homo sapiens (Human).